Consider the following 794-residue polypeptide: Phosphoenolpyruvate synthase (794 aa).

Histidine 422 acts as the Tele-phosphohistidine intermediate in catalysis. 7 residues coordinate substrate: arginine 512, arginine 579, glutamate 681, glycine 702, serine 703, asparagine 704, and aspartate 705. Glutamate 681 lines the Mg(2+) pocket. Position 705 (aspartate 705) interacts with Mg(2+). Cysteine 752 (proton donor) is an active-site residue.

Belongs to the PEP-utilizing enzyme family. Mg(2+) is required as a cofactor.

It catalyses the reaction pyruvate + ATP + H2O = phosphoenolpyruvate + AMP + phosphate + 2 H(+). It functions in the pathway carbohydrate biosynthesis; gluconeogenesis. Functionally, catalyzes the phosphorylation of pyruvate to phosphoenolpyruvate. The protein is Phosphoenolpyruvate synthase (ppsA) of Neisseria meningitidis serogroup B (strain ATCC BAA-335 / MC58).